The sequence spans 155 residues: Protein SREK1IP1 (155 aa).

The segment at 13–30 adopts a CCHC-type zinc-finger fold; sequence AGCKKCGYPGHLTFECRN. Positions 44-155 are disordered; that stretch reads VSSTSSEDSD…TPNSSEFSRK (112 aa). Ser-52 carries the post-translational modification Phosphoserine. Residues 66–84 show a composition bias toward basic and acidic residues; it reads QEKRINEEEEKKKEKSKEK. Positions 85 to 94 are enriched in basic residues; that stretch reads IKLKKKRKRS. Phosphoserine occurs at positions 96 and 97. Over residues 107–142 the composition is skewed to basic residues; that stretch reads QKKQKYQKKEKKKEKKSKSKKGKHHKKEKKKRKKEK. At Thr-146 the chain carries Phosphothreonine. Polar residues predominate over residues 146 to 155; it reads TPNSSEFSRK.

In terms of assembly, interacts with SREK1/SFRS12.

Possible splicing regulator involved in the control of cellular survival. This Homo sapiens (Human) protein is Protein SREK1IP1 (SREK1IP1).